Reading from the N-terminus, the 184-residue chain is Bifunctional protein PyrR (184 aa).

The PRPP-binding signature appears at 98–110 (VVLVDDVLYTGRT).

This sequence belongs to the purine/pyrimidine phosphoribosyltransferase family. PyrR subfamily.

It catalyses the reaction UMP + diphosphate = 5-phospho-alpha-D-ribose 1-diphosphate + uracil. In terms of biological role, regulates the transcription of the pyrimidine nucleotide (pyr) operon in response to exogenous pyrimidines. Its function is as follows. Also displays a weak uracil phosphoribosyltransferase activity which is not physiologically significant. The protein is Bifunctional protein PyrR of Roseiflexus castenholzii (strain DSM 13941 / HLO8).